The primary structure comprises 98 residues: Large ribosomal subunit protein uL23c (98 aa).

Belongs to the universal ribosomal protein uL23 family. Part of the 50S ribosomal subunit.

It localises to the plastid. It is found in the chloroplast. Its function is as follows. Binds to 23S rRNA. In Thalassiosira pseudonana (Marine diatom), this protein is Large ribosomal subunit protein uL23c (rpl23).